The following is a 124-amino-acid chain: Glycine cleavage system H protein (124 aa).

Residues 22 to 104 (LIVTGISDHA…YGKGWIYKMK (83 aa)) form the Lipoyl-binding domain. Lysine 63 carries the N6-lipoyllysine modification.

The protein belongs to the GcvH family. The glycine cleavage system is composed of four proteins: P, T, L and H. (R)-lipoate is required as a cofactor.

The glycine cleavage system catalyzes the degradation of glycine. The H protein shuttles the methylamine group of glycine from the P protein to the T protein. The polypeptide is Glycine cleavage system H protein (Acinetobacter baylyi (strain ATCC 33305 / BD413 / ADP1)).